Consider the following 356-residue polypeptide: Histidinol-phosphate aminotransferase (356 aa).

The residue at position 210 (Lys210) is an N6-(pyridoxal phosphate)lysine.

It belongs to the class-II pyridoxal-phosphate-dependent aminotransferase family. Histidinol-phosphate aminotransferase subfamily. Homodimer. The cofactor is pyridoxal 5'-phosphate.

The catalysed reaction is L-histidinol phosphate + 2-oxoglutarate = 3-(imidazol-4-yl)-2-oxopropyl phosphate + L-glutamate. Its pathway is amino-acid biosynthesis; L-histidine biosynthesis; L-histidine from 5-phospho-alpha-D-ribose 1-diphosphate: step 7/9. This Acetobacter pasteurianus (Acetobacter turbidans) protein is Histidinol-phosphate aminotransferase (hisC).